The chain runs to 273 residues: Bifunctional protein FolD (273 aa).

Residues 152-154 (GRS), T179, and I220 contribute to the NADP(+) site.

Belongs to the tetrahydrofolate dehydrogenase/cyclohydrolase family. In terms of assembly, homodimer.

The enzyme catalyses (6R)-5,10-methylene-5,6,7,8-tetrahydrofolate + NADP(+) = (6R)-5,10-methenyltetrahydrofolate + NADPH. The catalysed reaction is (6R)-5,10-methenyltetrahydrofolate + H2O = (6R)-10-formyltetrahydrofolate + H(+). Its pathway is one-carbon metabolism; tetrahydrofolate interconversion. Catalyzes the oxidation of 5,10-methylenetetrahydrofolate to 5,10-methenyltetrahydrofolate and then the hydrolysis of 5,10-methenyltetrahydrofolate to 10-formyltetrahydrofolate. The sequence is that of Bifunctional protein FolD from Petrotoga mobilis (strain DSM 10674 / SJ95).